The primary structure comprises 710 residues: Methionine--tRNA ligase (710 aa).

Positions 16–26 (PYANGAFHIGH) match the 'HIGH' region motif. Zn(2+) contacts are provided by Cys-147, Cys-150, Cys-160, and Cys-163. The 'KMSKS' region signature appears at 350–354 (KMSKS). Lys-353 is an ATP binding site. Positions 604 to 710 (DFAKIDLRIA…PGAEPGMRVG (107 aa)) constitute a tRNA-binding domain.

Belongs to the class-I aminoacyl-tRNA synthetase family. MetG type 1 subfamily. In terms of assembly, homodimer. It depends on Zn(2+) as a cofactor.

The protein resides in the cytoplasm. It carries out the reaction tRNA(Met) + L-methionine + ATP = L-methionyl-tRNA(Met) + AMP + diphosphate. In terms of biological role, is required not only for elongation of protein synthesis but also for the initiation of all mRNA translation through initiator tRNA(fMet) aminoacylation. This chain is Methionine--tRNA ligase, found in Herminiimonas arsenicoxydans.